Reading from the N-terminus, the 2364-residue chain is Cytotoxin-L (2364 aa).

Residues 1-91 (MNLVNKAQLQ…EVLELKNNSL (91 aa)) form a four-helical bundle region. A GT44 domain is found at 96–468 (KNLHFIWIGG…APDVRSTINL (373 aa)). The tract at residues 96–468 (KNLHFIWIGG…APDVRSTINL (373 aa)) is glucosyltransferase region. UDP-alpha-D-glucose is bound by residues 101-103 (IWI), Asn-139, 265-270 (LAAASD), and 286-288 (DVD). Mg(2+) is bound by residues Asp-288, Glu-515, and Ser-518. Residue 518-520 (SLW) participates in UDP-alpha-D-glucose binding. Residues 544 to 799 (GEDDNLDFAQ…KSKYLHELST (256 aa)) are autoprocessing region. 2 residues coordinate Zn(2+): Glu-545 and Asp-546. Residues 567 to 774 (LSSMKTRNKE…EESIIKDISS (208 aa)) enclose the Peptidase C80 domain. The 1D-myo-inositol hexakisphosphate site is built by Tyr-577, Lys-600, and Lys-647. His-653 contacts Zn(2+). Residue His-653 is the For protease activity of the active site. The Nucleophile; for protease activity role is filled by Cys-698. His-757 provides a ligand contact to Zn(2+). Positions 764, 775, and 792 each coordinate 1D-myo-inositol hexakisphosphate. The tract at residues 800–1500 (LLQEIRNNAN…ESIIRNIYMP (701 aa)) is translocation region. 5 interaction with host SEMA6A and SEMA6B regions span residues 1433-1438 (CMKLIE), 1466-1471 (DNETKY), 1484-1495 (FTAEFSNESIIR), 1504-1511 (NLFIYSSK), and 1596-1601 (YNNLDP). Cell wall-binding repeat units lie at residues 1813-1832 (EFGL…FGNM), 1833-1852 (VSGL…PKNN), 1854-1873 (ITGF…TKSG), 1876-1895 (SIGE…QGIL), 1926-1945 (FIGK…NYRA), 1946-1965 (AVEW…KTGE), 1967-1986 (LKGL…NGIM), 1987-2006 (QTGF…DGVM), 2007-2026 (QVGY…NGER), 2057-2076 (YNGI…SNTA), 2077-2097 (VVGW…NRAE), 2099-2118 (CIGL…NGIR), 2119-2138 (QLGF…SGKI), 2139-2158 (ELGY…SGLV), 2209-2224 (ETGW…YFDP), 2227-2249 (KKAY…NGIM), 2250-2269 (RTGL…DGKM), 2270-2289 (QFGY…DGKM), 2320-2339 (YTGW…EYIA), and 2340-2359 (ATGS…DTAE). A receptor-binding (CROPS) region region spans residues 1835–2364 (GLIYINDSLY…PDTAELVVSE (530 aa)).

It belongs to the clostridial glucosylating toxin (LCGT) family. Homomultimer; forms an inactive homomultimer at pH 8, which dissociates at pH 4, leading to cytotoxicity. Interacts with host SEMA6A; interaction promotes toxin entry into host cell. Interacts with host SEMA6B; interaction promotes toxin entry into host cell. Requires Zn(2+) as cofactor. The cofactor is Mn(2+). Mg(2+) is required as a cofactor. Undergoes autocatalytic cleavage to release the N-terminal part (Glucosyltransferase TcsL), which constitutes the active part of the toxin, in the host cytosol. 1D-myo-inositol hexakisphosphate-binding (InsP6) activates the peptidase C80 domain and promotes autoprocessing.

The protein localises to the secreted. It is found in the host endosome membrane. The protein resides in the host cytoplasm. Its subcellular location is the host cytosol. It localises to the host cell membrane. The enzyme catalyses L-threonyl-[protein] + UDP-alpha-D-glucose = 3-O-(alpha-D-glucosyl)-L-threonyl-[protein] + UDP + H(+). Protease activity is activated upon binding to 1D-myo-inositol hexakisphosphate (InsP6), which induces conformational reorganization. In terms of biological role, precursor of a cytotoxin that targets the vascular endothelium, inducing an anti-inflammatory effect and resulting in lethal toxic shock syndrome. TcsL constitutes the main toxin that mediates the pathology of P.sordellii infection, an anaerobic Gram-positive bacterium found in soil and in the gastrointestinal and vaginal tracts of animals and humans; although the majority of carriers are asymptomatic, pathogenic P.sordellii infections arise rapidly and are highly lethal. This form constitutes the precursor of the toxin: it enters into host cells and mediates autoprocessing to release the active toxin (Glucosyltransferase TcsL) into the host cytosol. Targets vascular endothelium by binding to the semaphorin proteins SEMA6A and SEMA6B, and enters host cells via clathrin-mediated endocytosis. Once entered into host cells, acidification in the endosome promotes the membrane insertion of the translocation region and formation of a pore, leading to translocation of the GT44 and peptidase C80 domains across the endosomal membrane. This activates the peptidase C80 domain and autocatalytic processing, releasing the N-terminal part (Glucosyltransferase TcsL), which constitutes the active part of the toxin, in the cytosol. Functionally, active form of the toxin, which is released into the host cytosol following autoprocessing and inactivates small GTPases. Acts by mediating monoglucosylation of small GTPases of the Ras (H-Ras/HRAS, K-Ras/KRAS, N-Ras/NRAS and Ral/RALA) family in host cells at the conserved threonine residue located in the switch I region ('Thr-37/35'), using UDP-alpha-D-glucose as the sugar donor. Also able to catalyze monoglucosylation of some members of the Rho family (Rac1 and Rap2A), but with less efficiency than with Ras proteins. Monoglucosylation of host small GTPases completely prevents the recognition of the downstream effector, blocking the GTPases in their inactive form and leading to apoptosis. Induces an anti-inflammatory effect, mainly by inactivating Ras proteins which results in blockage of the cell cycle and killing of immune cells. The absence or moderate local inflammatory response allows C.sordellii spreading in deep tissues, production of toxin which is released in the general circulation and causes a toxic shock syndrome. This chain is Cytotoxin-L, found in Paraclostridium sordellii (Clostridium sordellii).